The sequence spans 643 residues: MSYQVLARKWRPQTFADVVGQEHVLTALANGLSLGRIHHAYLFSGTRGVGKTSIARLLAKGLNCETGITATPCGVCDNCREIEQGRFVDLIEIDAASRTKVEDTRDLLDNVQYAPARGRFKVYLIDEVHMLSRHSFNALLKTLEEPPEHVKFLLATTDPQKLPVTILSRCLQFHLKALDVEQIRHQLEHILNEEHIAHEPRALQLLARAAEGSLRDALSLTDQAIASGDGQVSTQAVSAMLGTLDDDQALSLVEAMVEANGERVMALINEAAARGIEWEALLVEMLGLLHRIAMVQLSPAALGNDMAAIELRMRELARTIPPTDIQLYYQTLLIGRKELPYAPDRRMGVEMTLLRALAFHPRMPLPEPEVPRQSFAPVAPTAVMTPTQVPPQPQSAPQQAPTVPLPETTSQVLAARQQLQRVQGATKAKKSEPAAATRARPVNNAALERLASVTDRVQARPVPSALEKAPAKKEAYRWKATTPVMQQKEVVATPKALKKALEHEKTPELAAKLAAEAIERDPWAAQVSQLSLPKLVEQVALNAWKEESDNAVCLHLRSSQRHLNNRGAQQKLAEALSMLKGSTVELTIVEDDNPAVRTPLEWRQAIYEEKLAQARESIIADNNIQTLRRFFDAELDEESIRPI.

ATP is bound at residue 45–52; that stretch reads GTRGVGKT. 4 residues coordinate Zn(2+): cysteine 64, cysteine 73, cysteine 76, and cysteine 79. Positions 385-404 are disordered; that stretch reads TPTQVPPQPQSAPQQAPTVP.

This sequence belongs to the DnaX/STICHEL family. In terms of assembly, the DNA polymerase III holoenzyme complex contains at least 10 different subunits organized into 3 functionally essential subassemblies: the Pol III core, the beta sliding clamp processivity factor and the clamp-loading complex. The Pol III core (subunits alpha, epsilon and theta) contains the polymerase and the 3'-5' exonuclease proofreading activities. The polymerase is tethered to the template via the dimeric beta sliding clamp processivity factor. The clamp-loading complex (also called gamma complex) assembles the beta sliding clamp onto the primed template and plays a central role in the organization and communication at the replication fork. The clamp-loading complex contains delta, delta', psi and chi, and 3 copies of either or both of two different DnaX proteins, gamma and tau. The DNA replisome complex has a single clamp loader (3 tau and 1 each of delta, delta', psi and chi subunits) which binds 3 Pol III cores (1 core on the leading strand and 2 on the lagging strand) each with a beta sliding clamp dimer. Additional proteins in the replisome are other copies of gamma, psi and chi, Ssb, DNA helicase and RNA primase. The clamp loader hydrolyzes ATP to assemble the beta processivity factor onto the primed template and plays a central role in the organization and communication at the replication fork; the minimal complex to load the beta sliding clamp on DNA is delta, delta', gamma.

It catalyses the reaction DNA(n) + a 2'-deoxyribonucleoside 5'-triphosphate = DNA(n+1) + diphosphate. Part of the beta sliding clamp loading complex, which hydrolyzes ATP to load the beta clamp onto primed DNA to form the DNA replication pre-initiation complex. DNA polymerase III is a complex, multichain enzyme responsible for most of the replicative synthesis in bacteria. This DNA polymerase also exhibits 3'-5' exonuclease activity. The gamma complex (gamma(3),delta,delta') is thought to load beta dimers onto DNA by binding ATP which alters the complex's conformation so it can bind beta sliding clamp dimers and open them at one interface. Primed DNA is recognized, ATP is hydrolyzed releasing the gamma complex and closing the beta sliding clamp ring around the primed DNA. In terms of biological role, serves as a scaffold to trimerize the core complex. Functionally, interacts with the delta and delta' subunits to transfer the beta subunit on the DNA. Interacts with ATP, drives ATP-induced conformational changes in the gamma complex that opens the beta sliding clamp ring. After loading of primed DNA ATP is hydrolyzed and the beta sliding clamp ring closes. The chain is DNA polymerase III subunit tau (dnaX) from Escherichia coli (strain K12).